We begin with the raw amino-acid sequence, 280 residues long: Inhibitor of growth protein 2 (280 aa).

Residues 48 to 120 adopt a coiled-coil conformation; sequence VLRELDNKYQ…VENRARQMEL (73 aa). Positions 122-204 are disordered; sequence SQCFQDPAES…KQEREASPVE (83 aa). Positions 130–140 are enriched in basic and acidic residues; it reads ESERASDKAKM. Positions 181-193 are enriched in basic residues; sequence KKSKSAKKKKRSK. Lysine 195 participates in a covalent cross-link: Glycyl lysine isopeptide (Lys-Gly) (interchain with G-Cter in SUMO1). A PHD-type zinc finger spans residues 212–261; it reads PTYCLCNQVSYGEMIGCDNEQCPIEWFHFSCVSLTYKPKGKWYCPKCRGD. Cysteine 215, cysteine 217, cysteine 228, cysteine 233, histidine 239, cysteine 242, cysteine 255, and cysteine 258 together coordinate Zn(2+). Residues 258 to 274 are compositionally biased toward basic and acidic residues; that stretch reads CRGDNEKTMDKSTEKTK. The segment at 258-280 is disordered; sequence CRGDNEKTMDKSTEKTKKDRRSR. Positions 264–280 are PBR; the sequence is KTMDKSTEKTKKDRRSR.

Belongs to the ING family. As to quaternary structure, interacts with H3K4me3 and to a lesser extent with H3K4me2. Component of a mSin3A-like complex at least consisting of SIN3A, HDAC1, HDAC2, RBBP4/RbAp48, RBBP7/RbAp46, SAP30 and ING2. In terms of processing, sumoylation enhances its association with SIN3A and is required for binding to some target gene promoters, this is the case for TMEM71. Widely expressed. Higher expressed in colon-cancer tumor than in normal colon tissues.

It is found in the nucleus. In terms of biological role, seems to be involved in p53/TP53 activation and p53/TP53-dependent apoptotic pathways, probably by enhancing acetylation of p53/TP53. Component of a mSin3A-like corepressor complex, which is probably involved in deacetylation of nucleosomal histones. ING2 activity seems to be modulated by binding to phosphoinositides (PtdInsPs). This chain is Inhibitor of growth protein 2 (ING2), found in Homo sapiens (Human).